The sequence spans 128 residues: Large ribosomal subunit protein bL12 (128 aa).

This sequence belongs to the bacterial ribosomal protein bL12 family. Homodimer. Part of the ribosomal stalk of the 50S ribosomal subunit. Forms a multimeric L10(L12)X complex, where L10 forms an elongated spine to which 2 to 4 L12 dimers bind in a sequential fashion. Binds GTP-bound translation factors.

Functionally, forms part of the ribosomal stalk which helps the ribosome interact with GTP-bound translation factors. Is thus essential for accurate translation. This Corynebacterium jeikeium (strain K411) protein is Large ribosomal subunit protein bL12.